We begin with the raw amino-acid sequence, 366 residues long: Galactoside alpha-(1,2)-fucosyltransferase 1 (366 aa).

Residues 1–8 (MWPLSHRH) lie on the Cytoplasmic side of the membrane. A helical; Signal-anchor for type II membrane protein transmembrane segment spans residues 9-25 (LCLAFLLVCVLSAISFF). At 26–366 (LHVHQDSFRH…LSPLWTLAEP (341 aa)) the chain is on the lumenal side. N-linked (GlcNAc...) asparagine glycosylation is found at Asn-66, Asn-302, and Asn-328.

This sequence belongs to the glycosyltransferase 11 family.

The protein resides in the golgi apparatus. It is found in the golgi stack membrane. The catalysed reaction is a beta-D-galactosyl-(1-&gt;4)-N-acetyl-beta-D-glucosaminyl derivative + GDP-beta-L-fucose = an alpha-L-Fuc-(1-&gt;2)-beta-D-Gal-(1-&gt;4)-beta-D-GlcNAc derivative + GDP + H(+). The enzyme catalyses a ganglioside GA1 + GDP-beta-L-fucose = a ganglioside Fuc-GA1 + GDP + H(+). It catalyses the reaction a beta-D-Gal-(1-&gt;3)-beta-D-GlcNAc-(1-&gt;3)-beta-D-Gal-(1-&gt;4)-beta-D-Glc-(1&lt;-&gt;1')-Cer(d18:1(4E)) + GDP-beta-L-fucose = alpha-L-fucosyl-(1-&gt;2)- beta-D-galactosyl-(1-&gt;3)-N-acetyl-beta-D-glucosaminyl-(1-&gt;3)-beta-D-galactosyl-(1-&gt;4)-beta-D-glucosyl-(1&lt;-&gt;1')-N-acylsphing-4-enine + GDP + H(+). It carries out the reaction a neolactoside nLc4Cer(d18:1(4E)) + GDP-beta-L-fucose = a neolactoside IV(2)-alpha-Fuc-nLc4Cer(d18:1(4E)) + GDP + H(+). The catalysed reaction is a ganglioside GM1 + GDP-beta-L-fucose = a ganglioside Fuc-GM1 + GDP + H(+). The enzyme catalyses beta-D-galactosyl-(1-&gt;3)-N-acetyl-D-galactosamine + GDP-beta-L-fucose = alpha-L-fucosyl-(1-&gt;2)-beta-D-galactosyl-(1-&gt;3)-N-acetyl-D-galactosamine + GDP + H(+). It participates in protein modification; protein glycosylation. Catalyzes the transfer of L-fucose, from a guanosine diphosphate-beta-L-fucose, to the terminal galactose residue of glycoconjugates through an alpha(1,2) linkage leading to H antigen synthesis that is an intermediate substrate in the synthesis of ABO blood group antigens. H antigen is essential for maturation of the glomerular layer of the main olfactory bulb, in cell migration and early cell-cell contacts during tumor associated angiogenesis. Preferentially fucosylates soluble lactose and to a lesser extent fucosylates glycolipids gangliosides GA1 and GM1a. The polypeptide is Galactoside alpha-(1,2)-fucosyltransferase 1 (Alouatta caraya (Black howler monkey)).